The sequence spans 141 residues: MALKTATSGMWMTDDCKKSFMEMKWKKVHRYVVYKLEEKSRKVTVDKVGAAGESYDDLAASLPEDDCRYAVFDFDYVTVDNCRMSKIFFITWSPEASRIREKMMYATSKSGLRRVLDGVHYELQATDPTEMGFDKIQDRAK.

Position 8 is a phosphoserine (S8). The ADF-H domain maps to 8-141 (SGMWMTDDCK…GFDKIQDRAK (134 aa)).

This sequence belongs to the actin-binding proteins ADF family.

It localises to the cytoplasm. It is found in the cytoskeleton. Does not display typical F-actin depolymerizing activity. Exhibits a high ability to stabilize and cross-link actin filaments. Functions as an actin bundling protein with the highest efficiency under acidic conditions. May play a role in the modulation of levels of histone H3 lysine 4 trimethylation and H3 lysine 9 and 14 acetylation at the FLC locus. The chain is Actin-depolymerizing factor 9 (ADF9) from Arabidopsis thaliana (Mouse-ear cress).